The chain runs to 388 residues: 3-oxo-Delta(4,5)-steroid 5-beta-reductase (388 aa).

At S2 the chain carries N-acetylserine. Residues 35–37 (TGI), 63–64 (RR), 81–82 (DV), T105, and Q143 each bind NADP(+). Residues K147 and Y178 contribute to the active site. Residues Y178, I205, and 212-214 (SLM) contribute to the NADP(+) site.

This sequence belongs to the short-chain dehydrogenases/reductases (SDR) family. Highly divergent. As to quaternary structure, homodimer. As to expression, expressed in roots, stems, leaves, flowers, seeds and siliques. Expressed in the vascular bundles.

The enzyme catalyses 5beta-cholestan-3-one + NADP(+) = cholest-4-en-3-one + NADPH + H(+). The catalysed reaction is 4,5beta-dihydrocortisone + NADP(+) = cortisone + NADPH + H(+). Functionally, involved in vascular strand development. Catalyzes the stereospecific conversion of progesterone to 5-beta-pregnane-3,20-dione. Can use progesterone, testosterone, 21-acetyl cortexone, 2-cyclohexenone, but-1-en-3-one, ethyl acrylate, ethylmethacrylate, cortisone and canarigenone as substrates, lower activity with 3-methyl-2-cyclohexenone and 3,5,5-trimethyl-2-cyclohexenone as substrate, and no activity with canarigenin, canarigenin digitoxoside and pregnenolone. May be involved in the formation of 5-beta phytoecdysteroids. In Arabidopsis thaliana (Mouse-ear cress), this protein is 3-oxo-Delta(4,5)-steroid 5-beta-reductase (VEP1).